A 113-amino-acid polypeptide reads, in one-letter code: Hemerythrin (113 aa).

The Fe cation site is built by H25, H54, E58, H73, H77, H101, and D106.

Belongs to the hemerythrin family. As to quaternary structure, homotrimer.

Its function is as follows. Hemerythrin is a respiratory protein in blood cells of certain marine worms. The oxygen-binding site in each chain contains two iron atoms. In Siphonosoma cumanense (Sipunculan worm), this protein is Hemerythrin.